Here is a 117-residue protein sequence, read N- to C-terminus: UPF0102 protein FTW_1281 (117 aa).

It belongs to the UPF0102 family.

In Francisella tularensis subsp. tularensis (strain WY96-3418), this protein is UPF0102 protein FTW_1281.